The following is a 207-amino-acid chain: LexA repressor (207 aa).

The H-T-H motif DNA-binding region spans 29-49 (VREICSAVDLSSTSTVHGHLA). Catalysis depends on for autocatalytic cleavage activity residues serine 128 and lysine 166.

This sequence belongs to the peptidase S24 family. Homodimer.

It catalyses the reaction Hydrolysis of Ala-|-Gly bond in repressor LexA.. Its function is as follows. Represses a number of genes involved in the response to DNA damage (SOS response), including recA and lexA. In the presence of single-stranded DNA, RecA interacts with LexA causing an autocatalytic cleavage which disrupts the DNA-binding part of LexA, leading to derepression of the SOS regulon and eventually DNA repair. The sequence is that of LexA repressor from Lactobacillus johnsonii (strain CNCM I-12250 / La1 / NCC 533).